Here is a 63-residue protein sequence, read N- to C-terminus: Sec-independent protein translocase protein TatA (63 aa).

A helical transmembrane segment spans residues 1 to 21; that stretch reads MGSFSMWHWLIVLVIVLLLFG. The segment at 42–63 is disordered; the sequence is GMTDDDAPDTAKTVDHKADETK. Basic and acidic residues predominate over residues 53 to 63; the sequence is KTVDHKADETK.

It belongs to the TatA/E family. In terms of assembly, the Tat system comprises two distinct complexes: a TatABC complex, containing multiple copies of TatA, TatB and TatC subunits, and a separate TatA complex, containing only TatA subunits. Substrates initially bind to the TatABC complex, which probably triggers association of the separate TatA complex to form the active translocon.

The protein localises to the cell inner membrane. Part of the twin-arginine translocation (Tat) system that transports large folded proteins containing a characteristic twin-arginine motif in their signal peptide across membranes. TatA could form the protein-conducting channel of the Tat system. The sequence is that of Sec-independent protein translocase protein TatA from Rhizobium etli (strain CIAT 652).